A 724-amino-acid polypeptide reads, in one-letter code: MVRYMVTAALPYANGPIHAGHLAGAYLPADIFVRYLRLKGEDVVFICGTDEHGTPISFRALNEKRSPREIVDEFHEHIKTAFQRVKISFDYFGRTELPVHYRLSQEFFLKALENGYLVKKVTKQAYCEHDKRFLPDRFVIGTCPYCGAENQRGDQCEVCGRPLTPEILIEPRCAFCKNPITFRESTHYYIKMQEFEEKLKEWIKEKDWKPNVKNMVLGWIEEGLEERAITRDLDWGIPVPLDEEDMKNKVLYVWFEAPIGYISLTIEYFKRIGKPNEWKKYWLNLDGQTRVIHFIGKDNIPFHAIFWPAFLMAYGKYKDEEVEAEWNLPYDIPANEYLTLEGKKFSTSRNWAIWIHEFLDVFPADYLRYYLTSIMPETRDSDFSFAEFKTKINEELVNVLGNFVYRALTFVNRYFDGIVPERGELDELDRQALEEIEKTFEEVGKLIREYRFKDALKKVMNLAGFGNRYFDYKEPWKTIKEDKTRTGTTINISLQIVKALGILLEPFLPDASEKIWHFLNLEEVKTWRFTELPAGHKVRKPEILFKKASDDQIIYFILNYMGRNNPDAARELLEKYYKLEDVEKVAIEKFGEEDGRFMLKKIFKEKYKGEKKGEQKMQYVSFEEFSKIDLRIGKIVEVQDHPNADKLYVVKVDLGGEIRTLVAGLKKYYKPEELLNRYVVIVANLEPKKLRGVESQGMLLAADDGEKVALLMPDKEVKLGAKVR.

Residues 11–21 (PYANGPIHAGH) carry the 'HIGH' region motif. 4 residues coordinate Zn(2+): C143, C146, C156, and C159. The short motif at 344–348 (KFSTS) is the 'KMSKS' region element. T347 provides a ligand contact to ATP. The region spanning 624–724 (EFSKIDLRIG…KEVKLGAKVR (101 aa)) is the tRNA-binding domain.

It belongs to the class-I aminoacyl-tRNA synthetase family. MetG type 1 subfamily. Homodimer. Zn(2+) is required as a cofactor.

Its subcellular location is the cytoplasm. The catalysed reaction is tRNA(Met) + L-methionine + ATP = L-methionyl-tRNA(Met) + AMP + diphosphate. In terms of biological role, is required not only for elongation of protein synthesis but also for the initiation of all mRNA translation through initiator tRNA(fMet) aminoacylation. The polypeptide is Methionine--tRNA ligase (Pyrococcus furiosus (strain ATCC 43587 / DSM 3638 / JCM 8422 / Vc1)).